A 129-amino-acid chain; its full sequence is Lysozyme C-1/C-2 (129 aa).

A C-type lysozyme domain is found at 1–129 (KVFERCELAR…VSSYVEGCTL (129 aa)). Intrachain disulfides connect C6–C127, C30–C115, C65–C81, and C77–C95. Active-site residues include E35 and D53.

It belongs to the glycosyl hydrolase 22 family. As to quaternary structure, monomer.

It catalyses the reaction Hydrolysis of (1-&gt;4)-beta-linkages between N-acetylmuramic acid and N-acetyl-D-glucosamine residues in a peptidoglycan and between N-acetyl-D-glucosamine residues in chitodextrins.. Lysozymes have primarily a bacteriolytic function; those in tissues and body fluids are associated with the monocyte-macrophage system and enhance the activity of immunoagents. The sequence is that of Lysozyme C-1/C-2 from Axis axis (Axis deer).